We begin with the raw amino-acid sequence, 108 residues long: UPF0060 membrane protein Rsph17029_0436 (108 aa).

A run of 4 helical transmembrane segments spans residues 5-25 (LAAYAGAALAEIAGCFAVWAW), 32-52 (ALWLVPGALSLGAFAWLLALT), 62-82 (AVYGGVYVAASLLWLWAVEGV), and 86-106 (RWDMGGAALVLAGAAVILWAP).

It belongs to the UPF0060 family.

It localises to the cell inner membrane. The polypeptide is UPF0060 membrane protein Rsph17029_0436 (Cereibacter sphaeroides (strain ATCC 17029 / ATH 2.4.9) (Rhodobacter sphaeroides)).